The sequence spans 178 residues: Alkyl hydroperoxide reductase AhpD (178 aa).

The active-site Proton donor is the Cys-131. An intrachain disulfide couples Cys-131 to Cys-134. Residue Cys-134 is the Cysteine sulfenic acid (-SOH) intermediate of the active site.

It belongs to the AhpD family. Homotrimer.

It catalyses the reaction N(6)-[(R)-dihydrolipoyl]-L-lysyl-[lipoyl-carrier protein] + a hydroperoxide = N(6)-[(R)-lipoyl]-L-lysyl-[lipoyl-carrier protein] + an alcohol + H2O. Antioxidant protein with alkyl hydroperoxidase activity. Required for the reduction of the AhpC active site cysteine residues and for the regeneration of the AhpC enzyme activity. The sequence is that of Alkyl hydroperoxide reductase AhpD from Streptomyces coelicolor (strain ATCC BAA-471 / A3(2) / M145).